The chain runs to 792 residues: Probable beta-D-xylosidase 6 (792 aa).

An N-terminal signal peptide occupies residues 1 to 18; the sequence is MNLQLTLISLLFFTSAIA. Residues asparagine 44, asparagine 104, asparagine 124, and asparagine 239 are each glycosylated (N-linked (GlcNAc...) asparagine). The active site involves aspartate 309. N-linked (GlcNAc...) asparagine glycosylation is found at asparagine 444 and asparagine 618.

Belongs to the glycosyl hydrolase 3 family.

The protein resides in the secreted. The protein localises to the extracellular space. Its subcellular location is the extracellular matrix. This chain is Probable beta-D-xylosidase 6 (BXL6), found in Arabidopsis thaliana (Mouse-ear cress).